The primary structure comprises 70 residues: NAD(P)H-quinone oxidoreductase subunit L (70 aa).

A run of 2 helical transmembrane segments spans residues 2-22 and 39-59; these read IVPL…PVAL and TFMY…SPFV.

This sequence belongs to the complex I NdhL subunit family. In terms of assembly, NDH-1 can be composed of about 15 different subunits; different subcomplexes with different compositions have been identified which probably have different functions.

The protein resides in the cellular thylakoid membrane. The enzyme catalyses a plastoquinone + NADH + (n+1) H(+)(in) = a plastoquinol + NAD(+) + n H(+)(out). The catalysed reaction is a plastoquinone + NADPH + (n+1) H(+)(in) = a plastoquinol + NADP(+) + n H(+)(out). In terms of biological role, NDH-1 shuttles electrons from an unknown electron donor, via FMN and iron-sulfur (Fe-S) centers, to quinones in the respiratory and/or the photosynthetic chain. The immediate electron acceptor for the enzyme in this species is believed to be plastoquinone. Couples the redox reaction to proton translocation, and thus conserves the redox energy in a proton gradient. Cyanobacterial NDH-1 also plays a role in inorganic carbon-concentration. This chain is NAD(P)H-quinone oxidoreductase subunit L, found in Trichormus variabilis (strain ATCC 29413 / PCC 7937) (Anabaena variabilis).